A 544-amino-acid chain; its full sequence is Putative cysteine ligase BshC (544 aa).

Positions 431–463 (LNDTCRTIKEEHEKFIQELSRLDEKIYDFEEKN) form a coiled coil.

The protein belongs to the BshC family.

Functionally, involved in bacillithiol (BSH) biosynthesis. May catalyze the last step of the pathway, the addition of cysteine to glucosamine malate (GlcN-Mal) to generate BSH. The chain is Putative cysteine ligase BshC from Natranaerobius thermophilus (strain ATCC BAA-1301 / DSM 18059 / JW/NM-WN-LF).